We begin with the raw amino-acid sequence, 205 residues long: Holliday junction branch migration complex subunit RuvA (205 aa).

Residues 1-64 (MIGKLKGVVD…EDQIRLFGFS (64 aa)) are domain I. The segment at 65 to 143 (SAAERDWFRL…GFSASEPLAA (79 aa)) is domain II. The flexible linker stretch occupies residues 144-152 (QLGGGGVAS). Residues 153–205 (AQGGAAADAVSALVNLGYGVPQANAAIAAALRGAGEGAKTEVLIRLGLKELAK) form a domain III region.

Belongs to the RuvA family. In terms of assembly, homotetramer. Forms an RuvA(8)-RuvB(12)-Holliday junction (HJ) complex. HJ DNA is sandwiched between 2 RuvA tetramers; dsDNA enters through RuvA and exits via RuvB. An RuvB hexamer assembles on each DNA strand where it exits the tetramer. Each RuvB hexamer is contacted by two RuvA subunits (via domain III) on 2 adjacent RuvB subunits; this complex drives branch migration. In the full resolvosome a probable DNA-RuvA(4)-RuvB(12)-RuvC(2) complex forms which resolves the HJ.

Its subcellular location is the cytoplasm. The RuvA-RuvB-RuvC complex processes Holliday junction (HJ) DNA during genetic recombination and DNA repair, while the RuvA-RuvB complex plays an important role in the rescue of blocked DNA replication forks via replication fork reversal (RFR). RuvA specifically binds to HJ cruciform DNA, conferring on it an open structure. The RuvB hexamer acts as an ATP-dependent pump, pulling dsDNA into and through the RuvAB complex. HJ branch migration allows RuvC to scan DNA until it finds its consensus sequence, where it cleaves and resolves the cruciform DNA. This is Holliday junction branch migration complex subunit RuvA from Xanthobacter autotrophicus (strain ATCC BAA-1158 / Py2).